Here is a 69-residue protein sequence, read N- to C-terminus: UPF0150 protein ssr1258 (69 aa).

The protein belongs to the UPF0150 family.

The polypeptide is UPF0150 protein ssr1258 (Synechocystis sp. (strain ATCC 27184 / PCC 6803 / Kazusa)).